The chain runs to 459 residues: Siroheme synthase 2 (459 aa).

The segment at 1–204 is precorrin-2 dehydrogenase /sirohydrochlorin ferrochelatase; that stretch reads MDYLPIFCQL…EDRERVQQLT (204 aa). NAD(+) contacts are provided by residues 22–23 and 43–44; these read EI and LD. The residue at position 128 (S128) is a Phosphoserine. The uroporphyrinogen-III C-methyltransferase stretch occupies residues 216-459; the sequence is GEVTLVGAGP…KLSWFSDQTA (244 aa). P225 provides a ligand contact to S-adenosyl-L-methionine. D248 (proton acceptor) is an active-site residue. K270 functions as the Proton donor in the catalytic mechanism. S-adenosyl-L-methionine contacts are provided by residues 301-303, I306, 331-332, M382, and G411; these read GGD and TA.

It in the N-terminal section; belongs to the precorrin-2 dehydrogenase / sirohydrochlorin ferrochelatase family. The protein in the C-terminal section; belongs to the precorrin methyltransferase family.

The enzyme catalyses uroporphyrinogen III + 2 S-adenosyl-L-methionine = precorrin-2 + 2 S-adenosyl-L-homocysteine + H(+). The catalysed reaction is precorrin-2 + NAD(+) = sirohydrochlorin + NADH + 2 H(+). It carries out the reaction siroheme + 2 H(+) = sirohydrochlorin + Fe(2+). The protein operates within cofactor biosynthesis; adenosylcobalamin biosynthesis; precorrin-2 from uroporphyrinogen III: step 1/1. It participates in cofactor biosynthesis; adenosylcobalamin biosynthesis; sirohydrochlorin from precorrin-2: step 1/1. Its pathway is porphyrin-containing compound metabolism; siroheme biosynthesis; precorrin-2 from uroporphyrinogen III: step 1/1. It functions in the pathway porphyrin-containing compound metabolism; siroheme biosynthesis; siroheme from sirohydrochlorin: step 1/1. The protein operates within porphyrin-containing compound metabolism; siroheme biosynthesis; sirohydrochlorin from precorrin-2: step 1/1. In terms of biological role, multifunctional enzyme that catalyzes the SAM-dependent methylations of uroporphyrinogen III at position C-2 and C-7 to form precorrin-2 via precorrin-1. Then it catalyzes the NAD-dependent ring dehydrogenation of precorrin-2 to yield sirohydrochlorin. Finally, it catalyzes the ferrochelation of sirohydrochlorin to yield siroheme. This Pectobacterium atrosepticum (strain SCRI 1043 / ATCC BAA-672) (Erwinia carotovora subsp. atroseptica) protein is Siroheme synthase 2.